A 103-amino-acid chain; its full sequence is Small ribosomal subunit protein uS10 (103 aa).

Belongs to the universal ribosomal protein uS10 family. Part of the 30S ribosomal subunit.

Functionally, involved in the binding of tRNA to the ribosomes. The chain is Small ribosomal subunit protein uS10 from Vibrio campbellii (strain ATCC BAA-1116).